A 426-amino-acid polypeptide reads, in one-letter code: Enolase (426 aa).

Gln-163 is a (2R)-2-phosphoglycerate binding site. The active-site Proton donor is the Glu-205. Residues Asp-242, Glu-283, and Asp-310 each coordinate Mg(2+). (2R)-2-phosphoglycerate-binding residues include Lys-335, Arg-364, Ser-365, and Lys-386. The Proton acceptor role is filled by Lys-335.

This sequence belongs to the enolase family. It depends on Mg(2+) as a cofactor.

It is found in the cytoplasm. Its subcellular location is the secreted. It localises to the cell surface. The catalysed reaction is (2R)-2-phosphoglycerate = phosphoenolpyruvate + H2O. It functions in the pathway carbohydrate degradation; glycolysis; pyruvate from D-glyceraldehyde 3-phosphate: step 4/5. Catalyzes the reversible conversion of 2-phosphoglycerate (2-PG) into phosphoenolpyruvate (PEP). It is essential for the degradation of carbohydrates via glycolysis. This Pseudarthrobacter chlorophenolicus (strain ATCC 700700 / DSM 12829 / CIP 107037 / JCM 12360 / KCTC 9906 / NCIMB 13794 / A6) (Arthrobacter chlorophenolicus) protein is Enolase.